The sequence spans 366 residues: Patr class I histocompatibility antigen, C alpha chain (366 aa).

The signal sequence occupies residues 1–24 (MRVTAPRTLLLLLSGGLALTETWA). An alpha-1 region spans residues 25–114 (GSHSLRYFDT…LRGYYNQSED (90 aa)). Over 25–308 (GSHSLRYFDT…KPTSQPTIPI (284 aa)) the chain is Extracellular. A glycan (N-linked (GlcNAc...) asparagine) is linked at Asn110. An alpha-2 region spans residues 115-206 (GSHTLQWMYG…ENGKETLQRT (92 aa)). Intrachain disulfides connect Cys125-Cys192 and Cys227-Cys283. Positions 207-298 (ECPKTHMTHH…GLPEPLTLRW (92 aa)) are alpha-3. Residues 209 to 297 (PKTHMTHHPV…EGLPEPLTLR (89 aa)) form the Ig-like C1-type domain. The segment at 299-308 (KPTSQPTIPI) is connecting peptide. Residues 309 to 332 (VGIVAGLAVLAVLAVLGAVVTAMM) traverse the membrane as a helical segment. Topologically, residues 333-366 (CRRKSSGGKGGSCSQAACSNSAQGSDESLIACKA) are cytoplasmic. Phosphoserine occurs at positions 357 and 360.

The protein belongs to the MHC class I family. Heterodimer of an alpha chain and a beta chain (beta-2-microglobulin).

It localises to the membrane. Involved in the presentation of foreign antigens to the immune system. In Pan troglodytes (Chimpanzee), this protein is Patr class I histocompatibility antigen, C alpha chain.